The sequence spans 1004 residues: Unconventional myosin-Id (1004 aa).

Positions 9-695 constitute a Myosin motor domain; it reads FGKADFVLLD…TIFSLEEQRA (687 aa). 102 to 109 contributes to the ATP binding site; sequence GESGAGKT. An actin-binding region spans residues 572–594; that stretch reads MISLVEKLASKEPYYVRCIKPND. IQ domains follow at residues 699-719 and 721-741; these read KRIV…MRYR and MRAA…SYIR. In terms of domain architecture, TH1 spans 812–1003; that stretch reads GQRADLGLQR…RSGYILSVPG (192 aa).

Belongs to the TRAFAC class myosin-kinesin ATPase superfamily. Myosin family. As to quaternary structure, interacts (via the two IQ motifs) with calmodulin. Interacts with F-actin.

It localises to the cytoplasm. The protein localises to the perikaryon. Its subcellular location is the cell projection. It is found in the dendrite. The protein resides in the early endosome. It localises to the cell cortex. In terms of biological role, unconventional myosin that functions as actin-based motor protein with ATPase activity. Plays a role in the formation of Kupffer's vesicle, an organ that functions as a left-right organizer during embryogenesis. Plays a role in vesicular trafficking events that are required for normal lumen expansion of Kupffer's vesicle. Required for normal orientation of cilia in Kupffer's vesicle, and thus for normal, unidirectional circular flow and normal angular flow velocity, which then mediates asymmetric gene expression and left-right asymmetric development. Plays a role in endosomal protein trafficking, and especially in the transfer of cargo proteins from early to recycling endosomes. Required for normal planar cell polarity in ciliated cells, for normal rotational polarity of cilia, and for coordinated, unidirectional ciliary movement. The polypeptide is Unconventional myosin-Id (myo1d) (Danio rerio (Zebrafish)).